The following is a 292-amino-acid chain: tRNA-cytidine(32) 2-sulfurtransferase (292 aa).

The short motif at 53 to 58 (SGGKDS) is the PP-loop motif element. Residues Cys-128, Cys-131, and Cys-219 each contribute to the [4Fe-4S] cluster site.

Belongs to the TtcA family. In terms of assembly, homodimer. It depends on Mg(2+) as a cofactor. [4Fe-4S] cluster serves as cofactor.

The protein resides in the cytoplasm. It catalyses the reaction cytidine(32) in tRNA + S-sulfanyl-L-cysteinyl-[cysteine desulfurase] + AH2 + ATP = 2-thiocytidine(32) in tRNA + L-cysteinyl-[cysteine desulfurase] + A + AMP + diphosphate + H(+). It participates in tRNA modification. Functionally, catalyzes the ATP-dependent 2-thiolation of cytidine in position 32 of tRNA, to form 2-thiocytidine (s(2)C32). The sulfur atoms are provided by the cysteine/cysteine desulfurase (IscS) system. The chain is tRNA-cytidine(32) 2-sulfurtransferase from Cereibacter sphaeroides (strain ATCC 17029 / ATH 2.4.9) (Rhodobacter sphaeroides).